We begin with the raw amino-acid sequence, 654 residues long: Kelch-like protein 13 (654 aa).

The region spanning 91 to 160 (CDVTLMPGDT…IYTAKLSLNM (70 aa)) is the BTB domain. Positions 195 to 296 (CVEVGRIANT…TPQELINYVQ (102 aa)) constitute a BACK domain. 6 Kelch repeats span residues 340–388 (RLVT…VIGN), 389–440 (FLYV…ALKG), 441–487 (FLYA…VYGG), 489–534 (MYIS…TVGD), 536–586 (LYVI…VFEN), and 587–635 (KIYV…TLTV).

Component of the BCR(KLHL9-KLHL13) E3 ubiquitin ligase complex, at least composed of CUL3, KLHL9, KLHL13 and RBX1. Interacts with AURKB.

The protein operates within protein modification; protein ubiquitination. Substrate-specific adapter of a BCR (BTB-CUL3-RBX1) E3 ubiquitin-protein ligase complex required for mitotic progression and cytokinesis. The BCR(KLHL9-KLHL13) E3 ubiquitin ligase complex mediates the ubiquitination of AURKB and controls the dynamic behavior of AURKB on mitotic chromosomes and thereby coordinates faithful mitotic progression and completion of cytokinesis. This chain is Kelch-like protein 13 (Klhl13), found in Mus musculus (Mouse).